The primary structure comprises 178 residues: Large ribosomal subunit protein uL6 (178 aa).

Residues 155–169 (PYKGKGIKYDNEQIR) show a composition bias toward basic and acidic residues. Residues 155–178 (PYKGKGIKYDNEQIRRKAGKSGGK) are disordered.

The protein belongs to the universal ribosomal protein uL6 family. In terms of assembly, part of the 50S ribosomal subunit.

In terms of biological role, this protein binds to the 23S rRNA, and is important in its secondary structure. It is located near the subunit interface in the base of the L7/L12 stalk, and near the tRNA binding site of the peptidyltransferase center. This is Large ribosomal subunit protein uL6 from Nitratidesulfovibrio vulgaris (strain DSM 19637 / Miyazaki F) (Desulfovibrio vulgaris).